Consider the following 248-residue polypeptide: L-seryl-tRNA(Sec) kinase (248 aa).

ATP is bound at residue 7–14; the sequence is GLPGVGKS.

Belongs to the L-seryl-tRNA(Sec) kinase family.

It catalyses the reaction L-seryl-tRNA(Sec) + ATP = O-phospho-L-seryl-tRNA(Sec) + ADP. It participates in aminoacyl-tRNA biosynthesis; selenocysteinyl-tRNA(Sec) biosynthesis; selenocysteinyl-tRNA(Sec) from L-seryl-tRNA(Sec) (archaeal/eukaryal route): step 1/2. Functionally, specifically phosphorylates seryl-tRNA(Sec) to O-phosphoseryl-tRNA(Sec), an activated intermediate for selenocysteine biosynthesis. In Methanocaldococcus jannaschii (strain ATCC 43067 / DSM 2661 / JAL-1 / JCM 10045 / NBRC 100440) (Methanococcus jannaschii), this protein is L-seryl-tRNA(Sec) kinase (pstK).